A 422-amino-acid polypeptide reads, in one-letter code: 5'-deoxyadenosine deaminase (422 aa).

Zn(2+) contacts are provided by His57 and His59. 2 residues coordinate substrate: Glu86 and His178. His205 is a Zn(2+) binding site. Substrate is bound by residues Glu208 and Asp294. Asp294 serves as a coordination point for Zn(2+).

This sequence belongs to the metallo-dependent hydrolases superfamily. MTA/SAH deaminase family. In terms of assembly, homotetramer. Requires Zn(2+) as cofactor.

It catalyses the reaction 5'-deoxyadenosine + H2O + H(+) = 5'-deoxyinosine + NH4(+). The enzyme catalyses S-adenosyl-L-homocysteine + H2O + H(+) = S-inosyl-L-homocysteine + NH4(+). The catalysed reaction is S-methyl-5'-thioadenosine + H2O + H(+) = S-methyl-5'-thioinosine + NH4(+). It carries out the reaction adenosine + H2O + H(+) = inosine + NH4(+). The protein operates within amino-acid biosynthesis; S-adenosyl-L-methionine biosynthesis. In terms of biological role, catalyzes the deamination of three SAM-derived enzymatic products, namely 5'-deoxyadenosine, S-adenosyl-L-homocysteine, and 5'-methylthioadenosine, to produce the inosine analogs. Can also deaminate adenosine. The preferred substrate for this enzyme is 5'-deoxyadenosine, but all these substrates are efficiently deaminated. Likely functions in a S-adenosyl-L-methionine (SAM) recycling pathway from S-adenosyl-L-homocysteine (SAH) produced from SAM-dependent methylation reactions. May also be involved in the recycling of 5'-deoxyadenosine, whereupon the 5'-deoxyribose moiety of 5'-deoxyinosine is further metabolized to deoxyhexoses used for the biosynthesis of aromatic amino acids in methanogens. The chain is 5'-deoxyadenosine deaminase from Methanococcus vannielii (strain ATCC 35089 / DSM 1224 / JCM 13029 / OCM 148 / SB).